The sequence spans 800 residues: Phenylalanine--tRNA ligase beta subunit (800 aa).

Residues 39–154 (TKDIKKLVVG…EAVKPGTDAL (116 aa)) enclose the tRNA-binding domain. Residues 408 to 483 (SFVTPIEITA…RIYGYDEIPS (76 aa)) enclose the B5 domain. 4 residues coordinate Mg(2+): Asp461, Asp467, Glu470, and Glu471. Positions 708-800 (PRFPGVTRDI…ALKKHGAIIR (93 aa)) constitute an FDX-ACB domain.

It belongs to the phenylalanyl-tRNA synthetase beta subunit family. Type 1 subfamily. Tetramer of two alpha and two beta subunits. Mg(2+) serves as cofactor.

The protein localises to the cytoplasm. The catalysed reaction is tRNA(Phe) + L-phenylalanine + ATP = L-phenylalanyl-tRNA(Phe) + AMP + diphosphate + H(+). The protein is Phenylalanine--tRNA ligase beta subunit of Staphylococcus epidermidis (strain ATCC 12228 / FDA PCI 1200).